The following is a 212-amino-acid chain: uncharacterized protein (212 aa).

The 153-residue stretch at 46-198 folds into the SIS domain; the sequence is LERVYREKRK…IYSLMTRLGI (153 aa).

It belongs to the SIS family. PHI subfamily.

This is an uncharacterized protein from Aeropyrum pernix (strain ATCC 700893 / DSM 11879 / JCM 9820 / NBRC 100138 / K1).